The following is a 592-amino-acid chain: uncharacterized protein (592 aa).

This is an uncharacterized protein from Saccharolobus solfataricus (strain ATCC 35092 / DSM 1617 / JCM 11322 / P2) (Sulfolobus solfataricus).